The primary structure comprises 629 residues: tRNA uridine 5-carboxymethylaminomethyl modification enzyme MnmG (629 aa).

Residue 11-16 participates in FAD binding; the sequence is GGGHAG. Residue 273 to 287 coordinates NAD(+); that stretch reads GPRYCPSFEDKVVRF.

It belongs to the MnmG family. In terms of assembly, homodimer. Heterotetramer of two MnmE and two MnmG subunits. FAD is required as a cofactor.

The protein localises to the cytoplasm. NAD-binding protein involved in the addition of a carboxymethylaminomethyl (cmnm) group at the wobble position (U34) of certain tRNAs, forming tRNA-cmnm(5)s(2)U34. The sequence is that of tRNA uridine 5-carboxymethylaminomethyl modification enzyme MnmG from Mycoplasma capricolum subsp. capricolum (strain California kid / ATCC 27343 / NCTC 10154).